Here is a 397-residue protein sequence, read N- to C-terminus: uncharacterized protein (397 aa).

4 helical membrane passes run 142 to 162, 191 to 211, 242 to 258, and 260 to 280; these read WETIGTFTVSGLLVAVSVGIA, SQLLFEHPFMALGLIFGSVVL, ALTGMVSLLALSGTYFL, and APWLDPFFGCLVSIVVFSAGF.

This sequence belongs to the cation diffusion facilitator (CDF) transporter (TC 2.A.4) family. SLC30A subfamily.

It localises to the membrane. This is an uncharacterized protein from Schizosaccharomyces pombe (strain 972 / ATCC 24843) (Fission yeast).